We begin with the raw amino-acid sequence, 382 residues long: Succinate--CoA ligase [ADP-forming] subunit beta (382 aa).

An ATP-grasp domain is found at K9 to Y240. ATP-binding positions include K45, G52–G54, L94, and E99. The Mg(2+) site is built by N193 and D207. Substrate-binding positions include N260 and G317 to T319.

This sequence belongs to the succinate/malate CoA ligase beta subunit family. Heterotetramer of two alpha and two beta subunits. Mg(2+) is required as a cofactor.

It carries out the reaction succinate + ATP + CoA = succinyl-CoA + ADP + phosphate. It catalyses the reaction GTP + succinate + CoA = succinyl-CoA + GDP + phosphate. It functions in the pathway carbohydrate metabolism; tricarboxylic acid cycle; succinate from succinyl-CoA (ligase route): step 1/1. Functionally, succinyl-CoA synthetase functions in the citric acid cycle (TCA), coupling the hydrolysis of succinyl-CoA to the synthesis of either ATP or GTP and thus represents the only step of substrate-level phosphorylation in the TCA. The beta subunit provides nucleotide specificity of the enzyme and binds the substrate succinate, while the binding sites for coenzyme A and phosphate are found in the alpha subunit. The protein is Succinate--CoA ligase [ADP-forming] subunit beta of Pyrobaculum calidifontis (strain DSM 21063 / JCM 11548 / VA1).